Reading from the N-terminus, the 134-residue chain is Profilin-2 (134 aa).

A disulfide bond links Cys13 and Cys118. An Involved in PIP2 interaction motif is present at residues Ala84 to Thr100. Thr114 bears the Phosphothreonine mark.

This sequence belongs to the profilin family. As to quaternary structure, occurs in many kinds of cells as a complex with monomeric actin in a 1:1 ratio. In terms of processing, phosphorylated by MAP kinases.

The protein localises to the cytoplasm. The protein resides in the cytoskeleton. In terms of biological role, binds to actin and affects the structure of the cytoskeleton. At high concentrations, profilin prevents the polymerization of actin, whereas it enhances it at low concentrations. By binding to PIP2, it inhibits the formation of IP3 and DG. The sequence is that of Profilin-2 (PRO2) from Olea europaea (Common olive).